A 224-amino-acid polypeptide reads, in one-letter code: Putative adhesin A1C_06425 (224 aa).

The N-terminal stretch at 1–22 is a signal peptide; sequence MKKLLLIATTSATILSSSISFA.

The protein is Putative adhesin A1C_06425 of Rickettsia akari (strain Hartford).